Reading from the N-terminus, the 186-residue chain is Threonylcarbamoyl-AMP synthase (186 aa).

Positions 5 to 186 (TQSINDAVKC…DAITGEILRL (182 aa)) constitute a YrdC-like domain.

Belongs to the SUA5 family. TsaC subfamily.

It is found in the cytoplasm. It catalyses the reaction L-threonine + hydrogencarbonate + ATP = L-threonylcarbamoyladenylate + diphosphate + H2O. Its function is as follows. Required for the formation of a threonylcarbamoyl group on adenosine at position 37 (t(6)A37) in tRNAs that read codons beginning with adenine. Catalyzes the conversion of L-threonine, HCO(3)(-)/CO(2) and ATP to give threonylcarbamoyl-AMP (TC-AMP) as the acyladenylate intermediate, with the release of diphosphate. The polypeptide is Threonylcarbamoyl-AMP synthase (Coxiella burnetii (strain RSA 331 / Henzerling II)).